Here is a 737-residue protein sequence, read N- to C-terminus: Procollagen-lysine,2-oxoglutarate 5-dioxygenase 2 (737 aa).

The signal sequence occupies residues 1 to 25 (MGDRGARPGRLMPMLALLSWAAGLG). N-linked (GlcNAc...) asparagine glycosylation is found at Asn-63 and Asn-209. A Phosphothreonine modification is found at Thr-320. The residue at position 323 (Tyr-323) is a Phosphotyrosine. Asn-365 and Asn-522 each carry an N-linked (GlcNAc...) asparagine glycan. One can recognise a Fe2OG dioxygenase domain in the interval 644 to 737 (KGFALLNFVV…RYIAVSFIDP (94 aa)). Residues His-666 and Asp-668 each contribute to the Fe cation site. Asn-696 carries N-linked (GlcNAc...) asparagine glycosylation. Position 704 is an N6-succinyllysine (Lys-704). His-718 is a Fe cation binding site. The N-linked (GlcNAc...) asparagine glycan is linked to Asn-725. Residue Arg-728 is part of the active site.

Homodimer. Fe(2+) is required as a cofactor. Requires L-ascorbate as cofactor. In terms of tissue distribution, is highly expressed in the heart, lung, kidney, eye, ovary and placenta.

It is found in the rough endoplasmic reticulum membrane. The catalysed reaction is L-lysyl-[collagen] + 2-oxoglutarate + O2 = (5R)-5-hydroxy-L-lysyl-[collagen] + succinate + CO2. In terms of biological role, forms hydroxylysine residues in -Xaa-Lys-Gly- sequences in collagens. These hydroxylysines serve as sites of attachment for carbohydrate units and are essential for the stability of the intermolecular collagen cross-links. This is Procollagen-lysine,2-oxoglutarate 5-dioxygenase 2 (Plod2) from Mus musculus (Mouse).